We begin with the raw amino-acid sequence, 252 residues long: Enolase-phosphatase E1 (252 aa).

Asp-14 and Glu-16 together coordinate Mg(2+). Substrate contacts are provided by residues 143–144 (SS) and Lys-177. Asp-202 is a Mg(2+) binding site.

It belongs to the HAD-like hydrolase superfamily. MasA/MtnC family. As to quaternary structure, monomer. Mg(2+) is required as a cofactor.

Its subcellular location is the cytoplasm. The protein resides in the nucleus. The catalysed reaction is 5-methylsulfanyl-2,3-dioxopentyl phosphate + H2O = 1,2-dihydroxy-5-(methylsulfanyl)pent-1-en-3-one + phosphate. It participates in amino-acid biosynthesis; L-methionine biosynthesis via salvage pathway; L-methionine from S-methyl-5-thio-alpha-D-ribose 1-phosphate: step 3/6. The protein operates within amino-acid biosynthesis; L-methionine biosynthesis via salvage pathway; L-methionine from S-methyl-5-thio-alpha-D-ribose 1-phosphate: step 4/6. Its function is as follows. Bifunctional enzyme that catalyzes the enolization of 2,3-diketo-5-methylthiopentyl-1-phosphate (DK-MTP-1-P) into the intermediate 2-hydroxy-3-keto-5-methylthiopentenyl-1-phosphate (HK-MTPenyl-1-P), which is then dephosphorylated to form the acireductone 1,2-dihydroxy-3-keto-5-methylthiopentene (DHK-MTPene). The polypeptide is Enolase-phosphatase E1 (Drosophila pseudoobscura pseudoobscura (Fruit fly)).